We begin with the raw amino-acid sequence, 142 residues long: Small ribosomal subunit protein uS12 (142 aa).

Residues 1-44 (MANGKYAARKLKKDRQKHRWSDTDYARRERGLGKKSDPLEGAPQ) are disordered. Residues 7–18 (AARKLKKDRQKH) are compositionally biased toward basic residues. The span at 19–38 (RWSDTDYARRERGLGKKSDP) shows a compositional bias: basic and acidic residues.

It belongs to the universal ribosomal protein uS12 family. In terms of assembly, part of the 30S ribosomal subunit.

With S4 and S5 plays an important role in translational accuracy. Located at the interface of the 30S and 50S subunits. In Haloarcula marismortui (strain ATCC 43049 / DSM 3752 / JCM 8966 / VKM B-1809) (Halobacterium marismortui), this protein is Small ribosomal subunit protein uS12.